A 394-amino-acid polypeptide reads, in one-letter code: Cobalt-precorrin-5B C(1)-methyltransferase (394 aa).

The protein belongs to the CbiD family.

The catalysed reaction is Co-precorrin-5B + S-adenosyl-L-methionine = Co-precorrin-6A + S-adenosyl-L-homocysteine. It functions in the pathway cofactor biosynthesis; adenosylcobalamin biosynthesis; cob(II)yrinate a,c-diamide from sirohydrochlorin (anaerobic route): step 6/10. Catalyzes the methylation of C-1 in cobalt-precorrin-5B to form cobalt-precorrin-6A. The chain is Cobalt-precorrin-5B C(1)-methyltransferase from Clostridium beijerinckii (strain ATCC 51743 / NCIMB 8052) (Clostridium acetobutylicum).